Reading from the N-terminus, the 446-residue chain is Probable glycine dehydrogenase (decarboxylating) subunit 1 (446 aa).

Belongs to the GcvP family. N-terminal subunit subfamily. The glycine cleavage system is composed of four proteins: P, T, L and H. In this organism, the P 'protein' is a heterodimer of two subunits.

The catalysed reaction is N(6)-[(R)-lipoyl]-L-lysyl-[glycine-cleavage complex H protein] + glycine + H(+) = N(6)-[(R)-S(8)-aminomethyldihydrolipoyl]-L-lysyl-[glycine-cleavage complex H protein] + CO2. In terms of biological role, the glycine cleavage system catalyzes the degradation of glycine. The P protein binds the alpha-amino group of glycine through its pyridoxal phosphate cofactor; CO(2) is released and the remaining methylamine moiety is then transferred to the lipoamide cofactor of the H protein. This is Probable glycine dehydrogenase (decarboxylating) subunit 1 from Methylocella silvestris (strain DSM 15510 / CIP 108128 / LMG 27833 / NCIMB 13906 / BL2).